A 25-amino-acid polypeptide reads, in one-letter code: Germin-like protein (25 aa).

It belongs to the germin family. Oligomer (believed to be a pentamer but probably hexamer). In terms of processing, the three different mass spectrometry results appear to arise from different glycosylation variants.

The protein localises to the secreted. It localises to the extracellular space. Its subcellular location is the apoplast. Functionally, may play a role in plant defense. Probably has no oxalate oxidase activity even if the active site is conserved. The protein is Germin-like protein of Citrus sinensis (Sweet orange).